A 622-amino-acid chain; its full sequence is Golgin subfamily A member 6-like protein 7 (622 aa).

Disordered stretches follow at residues M1–L82, R251–V496, and E511–R580. 6 stretches are compositionally biased toward basic and acidic residues: residues S57 to A74, R251 to E275, E283 to E332, E339 to E367, E374 to E388, and E395 to E420. Residues K100–M534 adopt a coiled-coil conformation. Over residues Q477 to E489 the composition is skewed to acidic residues. 2 stretches are compositionally biased toward basic and acidic residues: residues E511–S546 and P567–R580.

This sequence belongs to the GOLGA6 family.

This Homo sapiens (Human) protein is Golgin subfamily A member 6-like protein 7.